The chain runs to 107 residues: Phosphoribosyl-ATP pyrophosphatase (107 aa).

This sequence belongs to the PRA-PH family.

It localises to the cytoplasm. It catalyses the reaction 1-(5-phospho-beta-D-ribosyl)-ATP + H2O = 1-(5-phospho-beta-D-ribosyl)-5'-AMP + diphosphate + H(+). Its pathway is amino-acid biosynthesis; L-histidine biosynthesis; L-histidine from 5-phospho-alpha-D-ribose 1-diphosphate: step 2/9. The protein is Phosphoribosyl-ATP pyrophosphatase of Bacillus cytotoxicus (strain DSM 22905 / CIP 110041 / 391-98 / NVH 391-98).